The following is a 102-amino-acid chain: Large ribosomal subunit protein bL21 (102 aa).

The protein belongs to the bacterial ribosomal protein bL21 family. As to quaternary structure, part of the 50S ribosomal subunit. Contacts protein L20.

Functionally, this protein binds to 23S rRNA in the presence of protein L20. This chain is Large ribosomal subunit protein bL21, found in Arthrobacter sp. (strain FB24).